The chain runs to 464 residues: UDP-N-acetylmuramoylalanine--D-glutamate ligase (464 aa).

Position 112-118 (112-118) interacts with ATP; that stretch reads GTDGKTT.

Belongs to the MurCDEF family.

It localises to the cytoplasm. The catalysed reaction is UDP-N-acetyl-alpha-D-muramoyl-L-alanine + D-glutamate + ATP = UDP-N-acetyl-alpha-D-muramoyl-L-alanyl-D-glutamate + ADP + phosphate + H(+). Its pathway is cell wall biogenesis; peptidoglycan biosynthesis. Cell wall formation. Catalyzes the addition of glutamate to the nucleotide precursor UDP-N-acetylmuramoyl-L-alanine (UMA). The chain is UDP-N-acetylmuramoylalanine--D-glutamate ligase from Pelodictyon phaeoclathratiforme (strain DSM 5477 / BU-1).